The following is a 495-amino-acid chain: Omega-crystallin (495 aa).

The protein belongs to the aldehyde dehydrogenase family. As to expression, lens.

Functionally, omega-crystallins are structural components of squids and octopi eye lens. Contains relatively little if any DHAL activity. The sequence is that of Omega-crystallin from Nototodarus sloanii (Wellington flying squid).